Consider the following 198-residue polypeptide: FMN-dependent NADH:quinone oxidoreductase (198 aa).

Residues Ser-10, Ser-16 to Ser-18, Met-94 to Phe-97, and Thr-138 to Gly-141 each bind FMN.

Belongs to the azoreductase type 1 family. As to quaternary structure, homodimer. FMN serves as cofactor.

The enzyme catalyses 2 a quinone + NADH + H(+) = 2 a 1,4-benzosemiquinone + NAD(+). It carries out the reaction N,N-dimethyl-1,4-phenylenediamine + anthranilate + 2 NAD(+) = 2-(4-dimethylaminophenyl)diazenylbenzoate + 2 NADH + 2 H(+). Its function is as follows. Quinone reductase that provides resistance to thiol-specific stress caused by electrophilic quinones. In terms of biological role, also exhibits azoreductase activity. Catalyzes the reductive cleavage of the azo bond in aromatic azo compounds to the corresponding amines. The sequence is that of FMN-dependent NADH:quinone oxidoreductase from Shewanella baltica (strain OS223).